We begin with the raw amino-acid sequence, 240 residues long: Uridylate kinase (240 aa).

12–15 (KLSG) is an ATP binding site. Positions 20-25 (GEDGFG) are involved in allosteric activation by GTP. Residue G54 coordinates UMP. G55 and R59 together coordinate ATP. UMP contacts are provided by residues D74 and 135 to 142 (TGNPYFST). N163, Y169, and D172 together coordinate ATP.

Belongs to the UMP kinase family. As to quaternary structure, homohexamer.

The protein localises to the cytoplasm. It carries out the reaction UMP + ATP = UDP + ADP. It functions in the pathway pyrimidine metabolism; CTP biosynthesis via de novo pathway; UDP from UMP (UMPK route): step 1/1. Allosterically activated by GTP. Probably inhibited by UTP. In terms of biological role, catalyzes the reversible phosphorylation of UMP to UDP. This is Uridylate kinase (pyrH) from Enterococcus faecalis (strain ATCC 700802 / V583).